Consider the following 415-residue polypeptide: tRNA(Met) cytidine acetate ligase (415 aa).

Residues 7-20 (VVEYNPFHNGHLYH), G101, N162, and 187-188 (RI) contribute to the ATP site.

Belongs to the TmcAL family. In terms of assembly, homodimer.

It localises to the cytoplasm. The enzyme catalyses cytidine(34) in elongator tRNA(Met) + acetate + ATP = N(4)-acetylcytidine(34) in elongator tRNA(Met) + AMP + diphosphate. Its function is as follows. Catalyzes the formation of N(4)-acetylcytidine (ac(4)C) at the wobble position of elongator tRNA(Met), using acetate and ATP as substrates. First activates an acetate ion to form acetyladenylate (Ac-AMP) and then transfers the acetyl group to tRNA to form ac(4)C34. The chain is tRNA(Met) cytidine acetate ligase from Bacillus subtilis (strain 168).